The following is a 252-amino-acid chain: 3-deoxy-manno-octulosonate cytidylyltransferase (252 aa).

It belongs to the KdsB family.

Its subcellular location is the cytoplasm. It catalyses the reaction 3-deoxy-alpha-D-manno-oct-2-ulosonate + CTP = CMP-3-deoxy-beta-D-manno-octulosonate + diphosphate. The protein operates within nucleotide-sugar biosynthesis; CMP-3-deoxy-D-manno-octulosonate biosynthesis; CMP-3-deoxy-D-manno-octulosonate from 3-deoxy-D-manno-octulosonate and CTP: step 1/1. Its pathway is bacterial outer membrane biogenesis; lipopolysaccharide biosynthesis. Activates KDO (a required 8-carbon sugar) for incorporation into bacterial lipopolysaccharide in Gram-negative bacteria. This Phocaeicola vulgatus (strain ATCC 8482 / DSM 1447 / JCM 5826 / CCUG 4940 / NBRC 14291 / NCTC 11154) (Bacteroides vulgatus) protein is 3-deoxy-manno-octulosonate cytidylyltransferase.